A 381-amino-acid chain; its full sequence is Probable serine/threonine-protein kinase PBL21 (381 aa).

C3 is lipidated: S-palmitoyl cysteine. The 277-residue stretch at 78 to 354 (FREVNLLGEG…GDIVVALEYL (277 aa)) folds into the Protein kinase domain. ATP is bound by residues 84–92 (LGEGGFGRV) and K106. The active-site Proton acceptor is the D204. Positions 362–381 (EARNVSSPSPEISRTPRRDL) are disordered.

The protein belongs to the protein kinase superfamily. Ser/Thr protein kinase family. In terms of processing, palmitoylation at Cys-3 and Cys-7 are required for plasma membrane location.

It is found in the cell membrane. It catalyses the reaction L-seryl-[protein] + ATP = O-phospho-L-seryl-[protein] + ADP + H(+). It carries out the reaction L-threonyl-[protein] + ATP = O-phospho-L-threonyl-[protein] + ADP + H(+). Its function is as follows. May be involved in plant defense signaling. The sequence is that of Probable serine/threonine-protein kinase PBL21 from Arabidopsis thaliana (Mouse-ear cress).